A 207-amino-acid chain; its full sequence is Large ribosomal subunit protein uL4 (207 aa).

The segment at 48-70 (KAQKTRSEVSGGGAKPWRQKGTG) is disordered.

Belongs to the universal ribosomal protein uL4 family. Part of the 50S ribosomal subunit.

In terms of biological role, one of the primary rRNA binding proteins, this protein initially binds near the 5'-end of the 23S rRNA. It is important during the early stages of 50S assembly. It makes multiple contacts with different domains of the 23S rRNA in the assembled 50S subunit and ribosome. Functionally, forms part of the polypeptide exit tunnel. This is Large ribosomal subunit protein uL4 from Francisella philomiragia subsp. philomiragia (strain ATCC 25017 / CCUG 19701 / FSC 153 / O#319-036).